The primary structure comprises 218 residues: MMDLKTKAFDISQNFTISLDGPAASGKGTIGLMLAKKFSLKYFQSSIVYRQLTFDCISQKIDITDIDAVIALSKRLKLDNNLDLENENIGDIASQIAVISEVRNNLNKYLINLVKTTPRIIMEGRDIGTVVAPDADLKIFITANPDIRAERRYKQLQAKGKACILDEILQQIILRDKRDKERKVAPLLPASDALIIDTSKLSAIEVVEEITHYMQIIK.

An ATP-binding site is contributed by 21–29 (GPAASGKGT).

It belongs to the cytidylate kinase family. Type 1 subfamily.

Its subcellular location is the cytoplasm. It catalyses the reaction CMP + ATP = CDP + ADP. It carries out the reaction dCMP + ATP = dCDP + ADP. The sequence is that of Cytidylate kinase from Rickettsia canadensis (strain McKiel).